Here is a 241-residue protein sequence, read N- to C-terminus: Beta-casein (241 aa).

Residues 1 to 15 form the signal peptide; sequence MKILILACLVALALA. A disordered region spans residues 21-45; it reads LNVSSETVESLSSNEPDSSSEESIT. At serine 24 the chain carries Phosphoserine; in form 4-P, form 5-P, form 6-P and form 7-P. The residue at position 25 (serine 25) is a Phosphoserine; in form 7-P. At threonine 27 the chain carries Phosphothreonine; in form 6-P and form 7-P. A phosphoserine mark is found at serine 30 and serine 32. A Phosphoserine; in form 5-P, form 6-P and form 7-P modification is found at serine 33. Phosphoserine; in form 4-P, form 5-P, form 6-P and form 7-P occurs at positions 38, 39, and 40. Asparagine 150 carries the deamidated asparagine modification.

This sequence belongs to the beta-casein family. In terms of processing, there are at least five different forms found in milk, with varying degrees of phosphorylation. These include form 3-P which is phosphorylated at three sites that have not been determined, this form is present in very low amounts, form 4-P which is phosphorylated at four sites, form 5-P which is phosphorylated at five sites, form 6-P which is phosphorylated at six sites, and form 7-P which is phosphorylated at seven sites. Spontaneous deamidation of Asn-150 produces aspartate or isoaspartate. Mammary gland specific. Secreted in milk.

Its subcellular location is the secreted. Functionally, important role in determination of the surface properties of the casein micelles. The protein is Beta-casein of Equus caballus (Horse).